We begin with the raw amino-acid sequence, 141 residues long: Hemoglobin subunit alpha-1/2 (141 aa).

The 141-residue stretch at 1-141 (VLSPADKANV…VGTVLTSKYR (141 aa)) folds into the Globin domain. Ser3 bears the Phosphoserine mark. N6-succinyllysine is present on residues Lys7 and Lys11. Lys16 is subject to N6-acetyllysine; alternate. Lys16 is subject to N6-succinyllysine; alternate. Phosphotyrosine is present on Tyr24. Ser35 carries the phosphoserine modification. Lys40 carries the post-translational modification N6-succinyllysine. Ser49 bears the Phosphoserine mark. His58 lines the O2 pocket. Residue His87 participates in heme b binding. Ser102 bears the Phosphoserine mark. Thr108 carries the phosphothreonine modification. Phosphoserine occurs at positions 124 and 131. Phosphothreonine occurs at positions 134 and 137. Phosphoserine is present on Ser138.

This sequence belongs to the globin family. As to quaternary structure, heterotetramer of two alpha chains and two beta chains. Red blood cells.

In terms of biological role, involved in oxygen transport from the lung to the various peripheral tissues. The chain is Hemoglobin subunit alpha-1/2 from Macroderma gigas (Australian ghost bat).